The chain runs to 226 residues: Ribonuclease 3 (226 aa).

In terms of domain architecture, RNase III spans 2 to 129 (IETISKTIKY…LIGAIYLDGG (128 aa)). Glu42 is a Mg(2+) binding site. Residue Asp46 is part of the active site. Positions 115 and 118 each coordinate Mg(2+). Glu118 is an active-site residue. The DRBM domain occupies 154–223 (DAKTILQEFI…ASLMLNQIKD (70 aa)).

It belongs to the ribonuclease III family. Homodimer. It depends on Mg(2+) as a cofactor.

The protein resides in the cytoplasm. It catalyses the reaction Endonucleolytic cleavage to 5'-phosphomonoester.. Digests double-stranded RNA. Involved in the processing of primary rRNA transcript to yield the immediate precursors to the large and small rRNAs (23S and 16S). Processes some mRNAs, and tRNAs when they are encoded in the rRNA operon. Processes pre-crRNA and tracrRNA of type II CRISPR loci if present in the organism. This chain is Ribonuclease 3, found in Ehrlichia canis (strain Jake).